A 270-amino-acid chain; its full sequence is MTALMTLNGVRIEYQDIGTSSAGKPALVLLTGWGHDLRYYRRLIPHLAPEFRVVALSWRGHDADRTLVGDYGVHEQTADTIALLDAIGVDVFVPVAHAHGGWVALQLADELGVQRVPRVLIADLIMTTIPSDFAAAVRDLQKPDRWKSARAGLAKSWLSGGVTLPLLKHLLIESRGFGFDTWARSGRVIEDAYNRWGSPMGRMEQLNEPRPIRHVFSHPKTSSYDELHVAFRGRHPWFSHRRLAGRTHFPAHELPREIATEIRAFVNEST.

Positions 25–156 (PALVLLTGWG…KSARAGLAKS (132 aa)) constitute an AB hydrolase-1 domain. Histidine 99 is a binding site for substrate. Histidine 248 functions as the Proton donor/acceptor in the catalytic mechanism.

The protein belongs to the AB hydrolase superfamily.

It carries out the reaction 2-heptyl-3-hydroxy-4(1H)-quinolone + O2 = N-octanoylanthranilate + CO + H(+). Involved in the degradation of the Pseudomonas aeruginosa quorum sensing signal molecules HHQ (2-heptyl-4-quinolone) and PQS (2-heptyl-3-hydroxy-4-quinolone) to anthranilic acid. Catalyzes the cleavage of PQS to form N-octanoylanthranilic acid and carbon monoxide. This chain is 2-heptyl-3-hydroxy-4-quinolone dioxygenase AqdC2, found in Rhodococcus erythropolis (Arthrobacter picolinophilus).